Consider the following 511-residue polypeptide: Chromosomal replication initiator protein DnaA (511 aa).

Residues Met1 to Pro90 form a domain I, interacts with DnaA modulators region. Residues Asn91–Ser174 form a domain II region. The segment at Val133–Arg162 is disordered. Over residues Ala135 to Phe144 the composition is skewed to basic and acidic residues. The segment at Tyr175–Ser391 is domain III, AAA+ region. 4 residues coordinate ATP: Gly219, Gly221, Lys222, and Thr223. Positions His392–Thr511 are domain IV, binds dsDNA.

This sequence belongs to the DnaA family. Oligomerizes as a right-handed, spiral filament on DNA at oriC.

The protein localises to the cytoplasm. Its function is as follows. Plays an essential role in the initiation and regulation of chromosomal replication. ATP-DnaA binds to the origin of replication (oriC) to initiate formation of the DNA replication initiation complex once per cell cycle. Binds the DnaA box (a 9 base pair repeat at the origin) and separates the double-stranded (ds)DNA. Forms a right-handed helical filament on oriC DNA; dsDNA binds to the exterior of the filament while single-stranded (ss)DNA is stabiized in the filament's interior. The ATP-DnaA-oriC complex binds and stabilizes one strand of the AT-rich DNA unwinding element (DUE), permitting loading of DNA polymerase. After initiation quickly degrades to an ADP-DnaA complex that is not apt for DNA replication. Binds acidic phospholipids. The chain is Chromosomal replication initiator protein DnaA from Pseudomonas savastanoi pv. phaseolicola (strain 1448A / Race 6) (Pseudomonas syringae pv. phaseolicola (strain 1448A / Race 6)).